We begin with the raw amino-acid sequence, 217 residues long: Segregation and condensation protein B (217 aa).

This sequence belongs to the ScpB family. As to quaternary structure, homodimer. Homodimerization may be required to stabilize the binding of ScpA to the Smc head domains. Component of a cohesin-like complex composed of ScpA, ScpB and the Smc homodimer, in which ScpA and ScpB bind to the head domain of Smc. The presence of the three proteins is required for the association of the complex with DNA.

The protein resides in the cytoplasm. Participates in chromosomal partition during cell division. May act via the formation of a condensin-like complex containing Smc and ScpA that pull DNA away from mid-cell into both cell halves. This is Segregation and condensation protein B from Geobacillus kaustophilus (strain HTA426).